Consider the following 3147-residue polypeptide: Probable polyketide synthase 1 (3147 aa).

A Ketosynthase family 3 (KS3) domain is found at 12 to 457; sequence SSDVAVIGVG…GSNCHLIIQE (446 aa). Active-site for beta-ketoacyl synthase activity residues include Cys-180 and His-319. The tract at residues 345-369 is disordered; that stretch reads QLNNFSTDGNDNDDDDDDNTSPEPL. The segment covering 354–364 has biased composition (acidic residues); that stretch reads NDNDDDDDDNT. His-380 functions as the For beta-ketoacyl synthase activity in the catalytic mechanism. The acyl/malonyl transferase stretch occupies residues 672-705; it reads GIYPSISVGHSFGEVSSYYLSGIISLETACKIVY. Ser-682 serves as the catalytic For acyl/malonyl transferase activity. Residues 976-1127 are N-terminal hotdog fold; sequence NRLEGPTTSL…ATISLEQQQP (152 aa). The 323-residue stretch at 976–1298 folds into the PKS/mFAS DH domain; the sequence is NRLEGPTTSL…IKSTNPKSTK (323 aa). The Proton acceptor; for dehydratase activity role is filled by His-1014. Residues 1149–1298 are C-terminal hotdog fold; sequence DISKLDKFEL…IKSTNPKSTK (150 aa). Asp-1209 serves as the catalytic Proton donor; for dehydratase activity. In terms of domain architecture, Carrier spans 2568-2645; the sequence is SSNISLQDKI…SFLEKVNGLS (78 aa). Ser-2605 is subject to O-(pantetheine 4'-phosphoryl)serine. The disordered stretch occupies residues 2723-2747; sequence PSLSQSDVLKTPPIKSLNNTKNSSL. The span at 2738-2747 shows a compositional bias: polar residues; sequence SLNNTKNSSL. The segment at 2789-3147 is chalcone synthase; the sequence is VLGIGISVPG…FEGCFLKNVV (359 aa). Residue Cys-2930 is part of the active site.

It in the C-terminal section; belongs to the thiolase-like superfamily. Chalcone/stilbene synthases family. Homodimer. Requires pantetheine 4'-phosphate as cofactor.

It catalyses the reaction (E)-4-coumaroyl-CoA + 3 malonyl-CoA + 3 H(+) = 2',4,4',6'-tetrahydroxychalcone + 3 CO2 + 4 CoA. Its pathway is secondary metabolite biosynthesis; flavonoid biosynthesis. Its function is as follows. Probable polyketide synthase. Produces only acylpyrones; in vitro. The polypeptide is Probable polyketide synthase 1 (stlA) (Dictyostelium discoideum (Social amoeba)).